Here is a 343-residue protein sequence, read N- to C-terminus: Protein RecA (343 aa).

66-73 contributes to the ATP binding site; the sequence is GPESSGKT.

The protein belongs to the RecA family.

The protein localises to the cytoplasm. Functionally, can catalyze the hydrolysis of ATP in the presence of single-stranded DNA, the ATP-dependent uptake of single-stranded DNA by duplex DNA, and the ATP-dependent hybridization of homologous single-stranded DNAs. It interacts with LexA causing its activation and leading to its autocatalytic cleavage. The protein is Protein RecA of Rickettsia bellii (strain OSU 85-389).